Consider the following 338-residue polypeptide: tRNA N6-adenosine threonylcarbamoyltransferase (338 aa).

Fe cation is bound by residues H111 and H115. Residues 134-138, D167, G180, and N272 each bind substrate; that span reads LVSGG. Fe cation is bound at residue D300.

Belongs to the KAE1 / TsaD family. The cofactor is Fe(2+).

Its subcellular location is the cytoplasm. The catalysed reaction is L-threonylcarbamoyladenylate + adenosine(37) in tRNA = N(6)-L-threonylcarbamoyladenosine(37) in tRNA + AMP + H(+). Its function is as follows. Required for the formation of a threonylcarbamoyl group on adenosine at position 37 (t(6)A37) in tRNAs that read codons beginning with adenine. Is involved in the transfer of the threonylcarbamoyl moiety of threonylcarbamoyl-AMP (TC-AMP) to the N6 group of A37, together with TsaE and TsaB. TsaD likely plays a direct catalytic role in this reaction. The sequence is that of tRNA N6-adenosine threonylcarbamoyltransferase from Shewanella putrefaciens (strain CN-32 / ATCC BAA-453).